A 218-amino-acid polypeptide reads, in one-letter code: Phosphoribosylformylglycinamidine synthase subunit PurQ (218 aa).

A Glutamine amidotransferase type-1 domain is found at 2 to 218 (SIAVLRFPGT…GARMLRGLAC (217 aa)). The Nucleophile role is filled by Cys86. Catalysis depends on residues His195 and Glu197.

In terms of assembly, part of the FGAM synthase complex composed of 1 PurL, 1 PurQ and 2 PurS subunits.

The protein resides in the cytoplasm. It carries out the reaction N(2)-formyl-N(1)-(5-phospho-beta-D-ribosyl)glycinamide + L-glutamine + ATP + H2O = 2-formamido-N(1)-(5-O-phospho-beta-D-ribosyl)acetamidine + L-glutamate + ADP + phosphate + H(+). The enzyme catalyses L-glutamine + H2O = L-glutamate + NH4(+). The protein operates within purine metabolism; IMP biosynthesis via de novo pathway; 5-amino-1-(5-phospho-D-ribosyl)imidazole from N(2)-formyl-N(1)-(5-phospho-D-ribosyl)glycinamide: step 1/2. Its function is as follows. Part of the phosphoribosylformylglycinamidine synthase complex involved in the purines biosynthetic pathway. Catalyzes the ATP-dependent conversion of formylglycinamide ribonucleotide (FGAR) and glutamine to yield formylglycinamidine ribonucleotide (FGAM) and glutamate. The FGAM synthase complex is composed of three subunits. PurQ produces an ammonia molecule by converting glutamine to glutamate. PurL transfers the ammonia molecule to FGAR to form FGAM in an ATP-dependent manner. PurS interacts with PurQ and PurL and is thought to assist in the transfer of the ammonia molecule from PurQ to PurL. This is Phosphoribosylformylglycinamidine synthase subunit PurQ from Wolinella succinogenes (strain ATCC 29543 / DSM 1740 / CCUG 13145 / JCM 31913 / LMG 7466 / NCTC 11488 / FDC 602W) (Vibrio succinogenes).